We begin with the raw amino-acid sequence, 187 residues long: Peptidoglycan-recognition protein 2 (187 aa).

A signal peptide spans 1–19 (MKAFLVALVVAIELTLVFA). Intrachain disulfides connect C21/C144 and C58/C64. Residues 43-170 (KPLKYVIIHH…RTVRPTDSPG (128 aa)) form the N-acetylmuramoyl-L-alanine amidase domain.

The protein belongs to the N-acetylmuramoyl-L-alanine amidase 2 family. In terms of tissue distribution, localizes to plasma (at protein level).

It localises to the secreted. In terms of biological role, peptidoglycan-recognition protein probably involved in innate immunity by binding to peptidoglycans (PGN) of bacteria and activating the prophenoloxidase (proPO) cascade immune response. Binds to 1,3-beta-D-glucan and PGN. This is Peptidoglycan-recognition protein 2 (PGRP-2) from Holotrichia diomphalia (Korean black chafer).